Consider the following 102-residue polypeptide: NADH-quinone oxidoreductase subunit K (102 aa).

The next 3 helical transmembrane spans lie at 5-25 (LGHF…GIFL), 31-51 (IVLL…FVAF), and 62-82 (IFVF…LAIL).

It belongs to the complex I subunit 4L family. NDH-1 is composed of 14 different subunits. Subunits NuoA, H, J, K, L, M, N constitute the membrane sector of the complex.

It localises to the cell inner membrane. It catalyses the reaction a quinone + NADH + 5 H(+)(in) = a quinol + NAD(+) + 4 H(+)(out). In terms of biological role, NDH-1 shuttles electrons from NADH, via FMN and iron-sulfur (Fe-S) centers, to quinones in the respiratory chain. The immediate electron acceptor for the enzyme in this species is believed to be ubiquinone. Couples the redox reaction to proton translocation (for every two electrons transferred, four hydrogen ions are translocated across the cytoplasmic membrane), and thus conserves the redox energy in a proton gradient. The sequence is that of NADH-quinone oxidoreductase subunit K from Albidiferax ferrireducens (strain ATCC BAA-621 / DSM 15236 / T118) (Rhodoferax ferrireducens).